The sequence spans 545 residues: Ubiquitin carboxyl-terminal hydrolase 17-like protein C (545 aa).

Positions 51–348 (CGLQNTGNSC…NAYVLFYVQQ (298 aa)) constitute a USP domain. The active-site Nucleophile is the cysteine 60. Histidine 307 (proton acceptor) is an active-site residue. Disordered stretches follow at residues 368–442 (DPEY…QKLG) and 489–539 (WGRD…KQGQ). Positions 374-385 (KKSRRKKHKKKS) are enriched in basic residues. Composition is skewed to basic and acidic residues over residues 393-404 (EPCKNREKRATK) and 489-505 (WGRDAPDKENQPWHNAD). Residues 508–519 (LTSQDPVNTGQL) show a composition bias toward polar residues. Residues 524-537 (GRRRSKKGKNKNKQ) show a composition bias toward basic residues.

It belongs to the peptidase C19 family. USP17 subfamily. In terms of tissue distribution, expressed in T cells.

The protein resides in the nucleus. It localises to the endoplasmic reticulum. The enzyme catalyses Thiol-dependent hydrolysis of ester, thioester, amide, peptide and isopeptide bonds formed by the C-terminal Gly of ubiquitin (a 76-residue protein attached to proteins as an intracellular targeting signal).. Functionally, deubiquitinating enzyme that removes conjugated ubiquitin from specific proteins to regulate different cellular processes. Important for preimplantation stage embryonic development. The sequence is that of Ubiquitin carboxyl-terminal hydrolase 17-like protein C from Mus musculus (Mouse).